Reading from the N-terminus, the 380-residue chain is Cytochrome b (380 aa).

4 helical membrane-spanning segments follow: residues 34–54 (FGSL…LLAM), 78–99 (WLIR…YFHI), 114–134 (WNTG…GYVL), and 179–199 (FFAL…IHLT). 2 residues coordinate heme b: His-84 and His-98. His-183 and His-197 together coordinate heme b. His-202 contacts a ubiquinone. The next 4 helical transmembrane spans lie at 227-247 (TKDI…ALFS), 289-309 (LGGV…PLLH), 321-341 (LSQL…WIGS), and 348-368 (FIII…ILFP).

Belongs to the cytochrome b family. The cytochrome bc1 complex contains 11 subunits: 3 respiratory subunits (MT-CYB, CYC1 and UQCRFS1), 2 core proteins (UQCRC1 and UQCRC2) and 6 low-molecular weight proteins (UQCRH/QCR6, UQCRB/QCR7, UQCRQ/QCR8, UQCR10/QCR9, UQCR11/QCR10 and a cleavage product of UQCRFS1). This cytochrome bc1 complex then forms a dimer. It depends on heme b as a cofactor.

It is found in the mitochondrion inner membrane. Functionally, component of the ubiquinol-cytochrome c reductase complex (complex III or cytochrome b-c1 complex) that is part of the mitochondrial respiratory chain. The b-c1 complex mediates electron transfer from ubiquinol to cytochrome c. Contributes to the generation of a proton gradient across the mitochondrial membrane that is then used for ATP synthesis. The polypeptide is Cytochrome b (MT-CYB) (Pygoscelis papua (Gentoo penguin)).